We begin with the raw amino-acid sequence, 601 residues long: Glutathione-regulated potassium-efflux system protein KefB (601 aa).

13 consecutive transmembrane segments (helical) span residues 4-24 (SDLLLAGVLFLFAAVIAVPLA), 29-49 (IGAVLGYLLAGIAIGPWGLGF), 55-75 (EILHFSELGVVFLMFIIGLEL), 87-107 (IFGVGAAQVMLSAAILGGLLM), 115-135 (AAVVGGIGLAMSSTAMALQLM), 152-172 (VLLFQDLAVIPALALVPLLAG), 177-197 (HVNWLTVGMKVLAFAGMLIGG), 207-227 (FIASSGVREVFTAATLLLVLG), 230-250 (LFMEALGLSMALGTFIAGVLL), 268-288 (GLLLGLFFISVGMALNLGVLY), 291-311 (LLWVAVSVAVLVAVKMLVLYL), 326-346 (FAGVLSQGGEFAFVLFSLPAS), and 356-376 (ALLLVAVTLSMMTTPLLMKGI). The 120-residue stretch at 400 to 519 (KPQVIIVGFG…AGVTQFSRET (120 aa)) folds into the RCK N-terminal domain.

Belongs to the monovalent cation:proton antiporter 2 (CPA2) transporter (TC 2.A.37) family. KefB subfamily. Interacts with the regulatory subunit KefG.

The protein resides in the cell inner membrane. Its function is as follows. Pore-forming subunit of a potassium efflux system that confers protection against electrophiles. Catalyzes K(+)/H(+) antiport. The sequence is that of Glutathione-regulated potassium-efflux system protein KefB from Klebsiella pneumoniae (strain 342).